The sequence spans 389 residues: Terminal nucleotidyltransferase 5D (389 aa).

The protein belongs to the TENT family. Restricted to testis.

The enzyme catalyses RNA(n) + ATP = RNA(n)-3'-adenine ribonucleotide + diphosphate. Catalyzes the transfer of one adenosine molecule from an ATP to an mRNA poly(A) tail bearing a 3'-OH terminal group. The protein is Terminal nucleotidyltransferase 5D of Homo sapiens (Human).